The sequence spans 150 residues: uncharacterized protein (150 aa).

This sequence belongs to the IIV-6 391R family.

This is an uncharacterized protein from Invertebrate iridescent virus 3 (IIV-3).